The following is a 693-amino-acid chain: Elongation factor G (693 aa).

One can recognise a tr-type G domain in the interval 8-282 (EKTRNIGIMA…AVIDYLPSPL (275 aa)). GTP contacts are provided by residues 17-24 (AHIDAGKT), 81-85 (DTPGH), and 135-138 (NKMD).

The protein belongs to the TRAFAC class translation factor GTPase superfamily. Classic translation factor GTPase family. EF-G/EF-2 subfamily.

It localises to the cytoplasm. In terms of biological role, catalyzes the GTP-dependent ribosomal translocation step during translation elongation. During this step, the ribosome changes from the pre-translocational (PRE) to the post-translocational (POST) state as the newly formed A-site-bound peptidyl-tRNA and P-site-bound deacylated tRNA move to the P and E sites, respectively. Catalyzes the coordinated movement of the two tRNA molecules, the mRNA and conformational changes in the ribosome. This is Elongation factor G from Staphylococcus aureus (strain Newman).